The primary structure comprises 312 residues: Porphobilinogen deaminase (312 aa).

Position 241 is an S-(dipyrrolylmethanemethyl)cysteine (Cys241).

It belongs to the HMBS family. As to quaternary structure, monomer. Requires dipyrromethane as cofactor.

The enzyme catalyses 4 porphobilinogen + H2O = hydroxymethylbilane + 4 NH4(+). It participates in porphyrin-containing compound metabolism; protoporphyrin-IX biosynthesis; coproporphyrinogen-III from 5-aminolevulinate: step 2/4. Its function is as follows. Tetrapolymerization of the monopyrrole PBG into the hydroxymethylbilane pre-uroporphyrinogen in several discrete steps. This is Porphobilinogen deaminase from Aliarcobacter butzleri (strain RM4018) (Arcobacter butzleri).